Consider the following 924-residue polypeptide: Nodulation receptor kinase (924 aa).

An N-terminal signal peptide occupies residues 1–29 (MMELRVICIIRLVVACVLCLCIFIRSASS). Residues 361 to 382 (EVIQKMRKELLLQNQDNEALES) adopt a coiled-coil conformation. LRR repeat units follow at residues 406 to 428 (VITK…VTEM), 430 to 452 (KLQI…PPSS), 453 to 475 (LLIS…IISL), and 477 to 498 (HLNS…AKLN). Residues 520 to 540 (FMIGAITSGSILITLAVVILF) traverse the membrane as a helical segment. Residues 595-872 (EKYKTLIGEG…IVRELEDALI (278 aa)) form the Protein kinase domain. ATP is bound by residues 601–609 (IGEGGFGSV) and lysine 623. Residue aspartate 721 is the Proton acceptor of the active site.

This sequence belongs to the protein kinase superfamily. Ser/Thr protein kinase family. In terms of processing, may be phosphorylated.

It localises to the membrane. The enzyme catalyses L-seryl-[protein] + ATP = O-phospho-L-seryl-[protein] + ADP + H(+). The catalysed reaction is L-threonyl-[protein] + ATP = O-phospho-L-threonyl-[protein] + ADP + H(+). Involved in the perception of symbiotic fungi and bacteria and required for the calcium spiking. Part of the perception/transduction system leading to nodulation or mycorrhizal infection. In Pisum sativum (Garden pea), this protein is Nodulation receptor kinase (NORK).